The primary structure comprises 207 residues: Large ribosomal subunit protein uL4 (207 aa).

The tract at residues 48-85 (THKVKNRSEVRGGGRKPWRQKGTGRARQGSIRSPQWRG) is disordered. Residues 60–71 (GGRKPWRQKGTG) are compositionally biased toward basic residues.

It belongs to the universal ribosomal protein uL4 family. As to quaternary structure, part of the 50S ribosomal subunit.

Its function is as follows. One of the primary rRNA binding proteins, this protein initially binds near the 5'-end of the 23S rRNA. It is important during the early stages of 50S assembly. It makes multiple contacts with different domains of the 23S rRNA in the assembled 50S subunit and ribosome. In terms of biological role, forms part of the polypeptide exit tunnel. This Bacillus subtilis (strain 168) protein is Large ribosomal subunit protein uL4.